Reading from the N-terminus, the 149-residue chain is MTQRTVWQDFQNGQQYMATWPMRKELAAIFPEQRYIKATKFATRVMPAVAVMSVLSQMAFNNYGALPQAMTVALFALTMPLQGLWWLGKRSRTTLPPSLAIWYREIYEKITSEGHAMQPLKKQPRYLELAEVLNRAFKQLDKTSLERWF.

Transmembrane regions (helical) follow at residues 41–60 and 65–87; these read FATRVMPAVAVMSVLSQMAF and ALPQAMTVALFALTMPLQGLWWL.

Belongs to the UPF0208 family.

The protein localises to the cell inner membrane. The sequence is that of UPF0208 membrane protein PBPRA2797 from Photobacterium profundum (strain SS9).